The following is a 280-amino-acid chain: Energy-coupling factor transporter ATP-binding protein EcfA2 (280 aa).

The ABC transporter domain maps to 3–245 (INLQNVSYTY…VSLLEKKQLG (243 aa)). ATP is bound at residue 40–47 (GHTGSGKS).

This sequence belongs to the ABC transporter superfamily. Energy-coupling factor EcfA family. As to quaternary structure, forms a stable energy-coupling factor (ECF) transporter complex composed of 2 membrane-embedded substrate-binding proteins (S component), 2 ATP-binding proteins (A component) and 2 transmembrane proteins (T component).

The protein resides in the cell membrane. Functionally, ATP-binding (A) component of a common energy-coupling factor (ECF) ABC-transporter complex. Unlike classic ABC transporters this ECF transporter provides the energy necessary to transport a number of different substrates. The chain is Energy-coupling factor transporter ATP-binding protein EcfA2 from Streptococcus pyogenes serotype M1.